A 62-amino-acid polypeptide reads, in one-letter code: MSYCFSSTVFPGCYWGSYGYPLGYSVGCGYGSTYSPVGYGFGYGYNGSGAFGCRRFWPFALY.

The interval 12-53 (GCYWGSYGYPLGYSVGCGYGSTYSPVGYGFGYGYNGSGAFGC) is 12 X 2 AA repeats of G-[YCGS].

Belongs to the KRTAP type 8 family. Interacts with wool keratins. As to expression, wool.

Its function is as follows. In the wool cortex, wool keratin intermediate filaments are embedded in an interfilamentous matrix, consisting of hair keratin-associated proteins (KRTAP), which are essential for the formation of a rigid and resistant wool shaft through their extensive disulfide bond cross-linking with abundant cysteine residues of wool keratins. The matrix proteins include the high-sulfur and high-glycine-tyrosine keratins. The polypeptide is Keratin-associated protein 8-1 (KRTAP8-1) (Ovis aries (Sheep)).